A 500-amino-acid polypeptide reads, in one-letter code: Xylan O-acetyltransferase 2 (500 aa).

Residues 1-25 (MGLPGRRNPLLSARRAAASLRRSRR) lie on the Cytoplasmic side of the membrane. A helical; Signal-anchor for type II membrane protein membrane pass occupies residues 26 to 43 (LPVYVAAVFFVASVLLMF). The Lumenal portion of the chain corresponds to 44-500 (RDEILYLTTA…RPPAAAGHVA (457 aa)). Residues 84–116 (PVLLGHGGKPEKHHSVTERHRPKVSAKRRPNKK) form a disordered region. Basic and acidic residues predominate over residues 91–102 (GKPEKHHSVTER). Residues 103–116 (HRPKVSAKRRPNKK) show a composition bias toward basic residues. Disulfide bonds link cysteine 143-cysteine 194, cysteine 165-cysteine 231, cysteine 174-cysteine 472, and cysteine 388-cysteine 468. N-linked (GlcNAc...) asparagine glycans are attached at residues asparagine 144 and asparagine 154. The GDS motif signature appears at 218-220 (GDS). Serine 220 (nucleophile) is an active-site residue. N-linked (GlcNAc...) asparagine glycans are attached at residues asparagine 260 and asparagine 416. Aspartate 467 (proton donor) is an active-site residue. The DXXH motif motif lies at 467-470 (DCIH). Histidine 470 serves as the catalytic Proton acceptor.

This sequence belongs to the PC-esterase family. TBL subfamily. As to expression, expressed at low levels in roots and leaves.

The protein resides in the golgi apparatus membrane. Functionally, xylan acetyltransferase required for 2-O- and 3-O-monoacetylation of xylosyl residues in xylan. Catalyzes the 2-O-acetylation of xylan, followed by nonenzymatic acetyl migration to the O-3 position, resulting in products that are monoacetylated at both O-2 and O-3 positions. The protein is Xylan O-acetyltransferase 2 of Oryza sativa subsp. japonica (Rice).